A 455-amino-acid chain; its full sequence is Inactive peptidyl-prolyl cis-trans isomerase shutdown (455 aa).

The disordered stretch occupies residues 34 to 54 (SQQNHARDLGLDSDSDSDYED). Residues 44–54 (LDSDSDSDYED) are compositionally biased toward acidic residues. The PPIase FKBP-type domain occupies 103-192 (KARVSVRYSG…LFKVEVIDYS (90 aa)). TPR repeat units follow at residues 218-251 (AVDL…LNYC) and 303-336 (CKAL…QPAN).

The protein belongs to the FKBP6 family. In terms of assembly, interacts with Hsp83. Strongly expressed in the germline stem cells and in 16-cell cysts. Present in the germ cells throughout embryogenesis. Defects are due to derepression of transposable elements and impaired piRNA biogenesis.

It is found in the cytoplasm. The protein resides in the cytoplasmic ribonucleoprotein granule. In terms of biological role, co-chaperone required during oogenesis to repress transposable elements and prevent their mobilization, which is essential for the germline integrity. Acts via the piRNA metabolic process, which mediates the repression of transposable elements during meiosis by forming complexes composed of piRNAs and Piwi proteins and govern the methylation and subsequent repression of transposons. Acts as a co-chaperone via its interaction with Hsp83/HSP90 and is required for the biogenesis of all three piRNA major populations. This chain is Inactive peptidyl-prolyl cis-trans isomerase shutdown, found in Drosophila melanogaster (Fruit fly).